The chain runs to 159 residues: Eukaryotic translation initiation factor 5A (159 aa).

Basic and acidic residues predominate over residues 1-12 (MSDEEHQFESKA). The tract at residues 1–23 (MSDEEHQFESKADAGASKTYPQQ) is disordered. Lys52 is subject to Hypusine.

The protein belongs to the eIF-5A family. In terms of processing, lys-52 undergoes hypusination, a unique post-translational modification that consists in the addition of a butylamino group from spermidine to lysine side chain, leading to the formation of the unusual amino acid hypusine. eIF-5As are the only known proteins to undergo this modification, which is essential for their function.

Its function is as follows. Translation factor that promotes translation elongation and termination, particularly upon ribosome stalling at specific amino acid sequence contexts. Binds between the exit (E) and peptidyl (P) site of the ribosome and promotes rescue of stalled ribosome: specifically required for efficient translation of polyproline-containing peptides as well as other motifs that stall the ribosome. Acts as a ribosome quality control (RQC) cofactor by joining the RQC complex to facilitate peptidyl transfer during CAT tailing step. This Senecio vernalis (Spring groundsel) protein is Eukaryotic translation initiation factor 5A (EIFSV1).